The primary structure comprises 155 residues: Cyanate hydratase (155 aa).

Active-site residues include Arg95, Glu98, and Ser121.

The protein belongs to the cyanase family.

The enzyme catalyses cyanate + hydrogencarbonate + 3 H(+) = NH4(+) + 2 CO2. Catalyzes the reaction of cyanate with bicarbonate to produce ammonia and carbon dioxide. This is Cyanate hydratase from Pseudomonas syringae pv. syringae (strain B728a).